A 167-amino-acid chain; its full sequence is MELAEKDKGRDFTLRNARMDDIDQIIKINRLTLPENYPYYFFVEHLKEYGLAFFVAIVDNSVVGYIMPRIEWGFSNIKQLPSLVRKGHVVSIAVLEEYRRKGIATTLLEASMKSMKNDYNAEEIYLEVRVSNYPAIALYEKLNFKKVKVLKGYYADGEDAYLMARPL.

Residues 12-167 (FTLRNARMDD…EDAYLMARPL (156 aa)) form the N-acetyltransferase domain. Y37 is a binding site for substrate. Residue H88 coordinates Zn(2+). Residues 92 to 94 (IAV) and 100 to 105 (RKGIAT) contribute to the acetyl-CoA site. A Zn(2+)-binding site is contributed by E127. Acetyl-CoA is bound by residues N132 and 139-141 (YEK). Y154 lines the substrate pocket.

This sequence belongs to the acetyltransferase family. ARD1 subfamily. In terms of assembly, homodimer.

Its subcellular location is the cytoplasm. It catalyses the reaction N-terminal L-alanyl-[protein] + acetyl-CoA = N-terminal N(alpha)-acetyl-L-alanyl-[protein] + CoA + H(+). It carries out the reaction N-terminal L-seryl-[protein] + acetyl-CoA = N-terminal N(alpha)-acetyl-L-seryl-[protein] + CoA + H(+). The catalysed reaction is N-terminal L-methionyl-L-leucyl-[protein] + acetyl-CoA = N-terminal N(alpha)-acetyl-L-methionyl-L-leucyl-[protein] + CoA + H(+). The enzyme catalyses N-terminal L-methionyl-L-glutamyl-[protein] + acetyl-CoA = N-terminal N(alpha)-acetyl-L-methionyl-L-glutamyl-[protein] + CoA + H(+). Displays alpha (N-terminal) acetyltransferase activity. Catalyzes the covalent attachment of an acetyl moiety from acetyl-CoA to the free alpha-amino group at the N-terminus of a protein. NAT is able to acetylate the alpha-amino group of methionine, alanine and serine N-terminal residue substrates, however it has a preference for Ser-N-terminal substrates. The chain is N-alpha-acetyltransferase from Saccharolobus solfataricus (strain ATCC 35092 / DSM 1617 / JCM 11322 / P2) (Sulfolobus solfataricus).